An 875-amino-acid polypeptide reads, in one-letter code: Cytosolic phospholipase A2 epsilon (875 aa).

The disordered stretch occupies residues Thr16–Ser70. A C2 domain is found at Val60–Phe183. Positions Pro61–Ser70 are enriched in low complexity. Ca(2+) contacts are provided by Asp97, Asp103, Asp153, Asp155, and Asp161. The PLA2c domain occupies Pro332–Ser875. Ser420 (nucleophile) is an active-site residue. Asp708 (proton acceptor) is an active-site residue. At Ser808 the chain carries Phosphoserine. Positions Glu865–Ser875 are required for localization at membrane structures.

Requires Ca(2+) as cofactor. Predominantly expressed in brain, heart, skeletal muscle, testis and thyroid. Expressed in neurons but not astrocytes or microglia. Expressed at lower level in stomach.

The protein localises to the cytoplasm. It is found in the cytosol. It localises to the early endosome membrane. Its subcellular location is the lysosome membrane. The protein resides in the cell membrane. It carries out the reaction a 1,2-diacyl-sn-glycero-3-phosphoethanolamine + a 1,2-diacyl-sn-glycero-3-phosphocholine = an N-acyl-1,2-diacyl-sn-glycero-3-phosphoethanolamine + a 2-acyl-sn-glycero-3-phosphocholine + H(+). It catalyses the reaction 1-hexadecanoyl-2-octadecanoyl-sn-glycero-3-phosphocholine + 1,2-di-(9Z-octadecenoyl)-sn-glycero-3-phosphoethanolamine = 2-octadecanoyl-sn-glycero-3-phosphocholine + N-hexadecanoyl-1,2-di-(9Z-octadecenoyl)-sn-glycero-3-phosphoethanolamine + H(+). The enzyme catalyses 1-octadecanoyl-2-hexadecanoyl-sn-glycero-3-phosphocholine + 1,2-di-(9Z-octadecenoyl)-sn-glycero-3-phosphoethanolamine = N-octadecanoyl-1,2-di-(9Z-octadecenoyl)-sn-glycero-3-phosphoethanolamine + 2-hexadecanoyl-sn-glycero-3-phosphocholine + H(+). The catalysed reaction is 1,2-di-(9Z-octadecenoyl)-sn-glycero-3-phosphoethanolamine + 1,2-dihexadecanoyl-sn-glycero-3-phosphocholine = N-hexadecanoyl-1,2-di-(9Z-octadecenoyl)-sn-glycero-3-phosphoethanolamine + 2-hexadecanoyl-sn-glycero-3-phosphocholine + H(+). It carries out the reaction 1,2-di-(5Z,8Z,11Z,14Z-eicosatetraenoyl)-sn-glycero-3-phosphocholine + 1,2-di-(9Z-octadecenoyl)-sn-glycero-3-phosphoethanolamine = N-(5Z,8Z,11Z,14Z-eicosatetraenoyl)-1,2-di-(9Z-octadecenoyl)-sn-glycero-3-phosphoethanolamine + 2-(5Z,8Z,11Z,14Z)-eicosatetraenoyl-sn-glycero-3-phosphocholine + H(+). It catalyses the reaction 2 1,2-di-(9Z-octadecenoyl)-sn-glycero-3-phosphoethanolamine = N,1,2-tri-(9Z-octadecenoyl)-sn-glycero-3-phosphoethanolamine + 2-(9Z-octadecenoyl)-sn-glycero-3-phosphoethanolamine + H(+). The enzyme catalyses a 1,2-diacyl-sn-glycero-3-phosphocholine + H2O = a 1-acyl-sn-glycero-3-phosphocholine + a fatty acid + H(+). The catalysed reaction is 1-(1Z-octadecenyl)-2-(9Z-octadecenoyl)-sn-glycero-3-phosphoethanolamine + 1,2-dihexadecanoyl-sn-glycero-3-phosphocholine = 1-O-(1Z-octadecenoyl)-2-(9Z-octadecenoyl)-sn-glycero-3-phospho-N-hexadecanoyl-ethanolamine + 2-hexadecanoyl-sn-glycero-3-phosphocholine + H(+). It carries out the reaction 1-hexadecanoyl-2-(5Z,8Z,11Z,14Z-eicosatetraenoyl)-sn-glycero-3-phosphocholine + H2O = 1-hexadecanoyl-sn-glycero-3-phosphocholine + (5Z,8Z,11Z,14Z)-eicosatetraenoate + H(+). It catalyses the reaction 1-hexadecanoyl-sn-glycero-3-phosphocholine + H2O = sn-glycerol 3-phosphocholine + hexadecanoate + H(+). Stimulated by cytosolic Ca(2+). Stimulated by anionic phospholipids such as phosphatidylserine. Calcium-dependent N-acyltransferase involved in the biosynthesis of N-acyl ethanolamines (NAEs) in the brain. Transfers the sn-1 fatty acyl chain of phosphatidylcholine (fatty acyl donor) to the amine group of phosphatidylethanolamine (fatty acyl acceptor) to generate N-acyl phosphatidylethanolamine (NAPE). Similarly can use plasmenylethanolamine as a fatty acyl acceptor to form N-acyl plasmenylethanolamine (N-Acyl-PlsEt). Both NAPE and N-Acyl-PlsEt can serve as precursors of bioactive NAEs like N-arachidonoyl phosphatidylethanolamine also called anandamide. Has weak phospholipase A2 and lysophospholipase activities. Regulates intracellular membrane trafficking that requires modulation of membrane curvature as it occurs by enrichment in lysophospholipids. Promotes tubule formation involved in clathrin-independent endocytotic trafficking and cargo recycling. The polypeptide is Cytosolic phospholipase A2 epsilon (Pla2g4e) (Mus musculus (Mouse)).